The primary structure comprises 184 residues: Transcription termination/antitermination protein NusG (184 aa).

Residues 133–163 (EGDQVRVVSGPFADFTGTVTEINPERGKVKV) enclose the KOW domain.

It belongs to the NusG family.

In terms of biological role, participates in transcription elongation, termination and antitermination. The chain is Transcription termination/antitermination protein NusG from Thermus thermophilus (strain ATCC 27634 / DSM 579 / HB8).